A 442-amino-acid polypeptide reads, in one-letter code: Hydroxycinnamoyltransferase 1 (442 aa).

Residues histidine 159 and aspartate 389 each act as proton acceptor in the active site.

This sequence belongs to the plant acyltransferase family. As to expression, expressed in roots, leaves, stems and seeds.

Hydroxycinnamoyl transferase that catalyzes the transfer of an acyl from p-coumaryol-CoA to various acyl acceptors. Can use feruloyl-CoA and caffeoyl-CoA as acyl donors. The polypeptide is Hydroxycinnamoyltransferase 1 (Oryza sativa subsp. japonica (Rice)).